The chain runs to 705 residues: Prolyl endopeptidase (705 aa).

The signal sequence occupies residues 1-20 (MKYNKLSVAVAAFAFAAVSA). Catalysis depends on charge relay system residues Ser-556 and His-675.

It belongs to the peptidase S9A family. In terms of assembly, monomer.

The protein localises to the periplasm. The enzyme catalyses Hydrolysis of Pro-|-Xaa &gt;&gt; Ala-|-Xaa in oligopeptides.. Cleaves peptide bonds on the C-terminal side of prolyl residues within peptides that are up to approximately 30 amino acids long. Has an absolute requirement for an X-Pro bond in the trans configuration immediately preceding the Pro-Y scissible bond. This Elizabethkingia meningoseptica (Chryseobacterium meningosepticum) protein is Prolyl endopeptidase (f1pep1).